Here is a 394-residue protein sequence, read N- to C-terminus: Nuclear hormone receptor family member nhr-103 (394 aa).

The segment at residues 8-83 (SGPCEICGQK…VGMDSKKFQT (76 aa)) is a DNA-binding region (nuclear receptor). An NR C4-type zinc finger spans residues 11–31 (CEICGQKTSGRHFGVLSCRSC). An NR C4-type; degenerate zinc finger spans residues 47-66 (QCVKGTCKIFEDGKFNCKQC). The NR LBD domain occupies 126–394 (YLVDMAKNLL…FSHPEMFETT (269 aa)).

It belongs to the nuclear hormone receptor family.

The protein localises to the nucleus. Orphan nuclear receptor. The polypeptide is Nuclear hormone receptor family member nhr-103 (nhr-103) (Caenorhabditis elegans).